A 274-amino-acid polypeptide reads, in one-letter code: uncharacterized protein (274 aa).

This sequence belongs to the type II cytokine receptor family.

This is an uncharacterized protein from Sus scrofa (Pig).